The primary structure comprises 142 residues: Transcriptional regulator MraZ (142 aa).

SpoVT-AbrB domains are found at residues 5–51 (ASAL…PRPE) and 77–120 (AMDV…DSQT).

This sequence belongs to the MraZ family. Forms oligomers.

It localises to the cytoplasm. The protein resides in the nucleoid. The chain is Transcriptional regulator MraZ from Burkholderia cenocepacia (strain HI2424).